We begin with the raw amino-acid sequence, 293 residues long: Bifunctional protein FolD 1 (293 aa).

NADP(+)-binding positions include 174–176 (GRS) and Thr240.

It belongs to the tetrahydrofolate dehydrogenase/cyclohydrolase family. In terms of assembly, homodimer.

It catalyses the reaction (6R)-5,10-methylene-5,6,7,8-tetrahydrofolate + NADP(+) = (6R)-5,10-methenyltetrahydrofolate + NADPH. It carries out the reaction (6R)-5,10-methenyltetrahydrofolate + H2O = (6R)-10-formyltetrahydrofolate + H(+). The protein operates within one-carbon metabolism; tetrahydrofolate interconversion. In terms of biological role, catalyzes the oxidation of 5,10-methylenetetrahydrofolate to 5,10-methenyltetrahydrofolate and then the hydrolysis of 5,10-methenyltetrahydrofolate to 10-formyltetrahydrofolate. In Saccharopolyspora erythraea (strain ATCC 11635 / DSM 40517 / JCM 4748 / NBRC 13426 / NCIMB 8594 / NRRL 2338), this protein is Bifunctional protein FolD 1.